The primary structure comprises 583 residues: MLKLISRNAINKNKIILFRLYTTTINSSNNGSTIREWKKPSLENSYDTGIMVKNSLFKNGNVPFLISNCSEKNQRPISWYTCGPTVYSSSHIGHARNYMTVDIIQRILINYFRFNIIHVMGLTDIDDKIINKSKQELISASELSKKFEQEFFEDLKSLNIKPPMFTTRVSEHIDEIIKYIEKIKENQLTYESTKSVIFDVNKFGIDRYCSLRAANQQIKSDDTLLEKDKKSSQDFVLWKAYNENIDIDGTGNPVCWDSPFGKGRPGWHIECSAMIDSIFKDHLDVHSGGVDLEFPHHQNEIAQCEGHSHSHGSGDAESTQWANYFFHIGHLILNNEKMSKSLGNVITIRDFLSRYSANSLRWICLIHKYNDPLSFSDETLQLCISKEIKFLNWFKIVRSKLKLEQTSVNKVKKTFNHSIELLNQLSETKYLIEKDLKDDFNTPSVIKRLELLMKQTNESMNSIDTDLLFNVQDYVESILNIFGLEVNSEISDHNKTDESNQFLLEKLLDFRSDVKNLAKNEKSLDQIKSKIYQITDQLRSDCQSEISLRVSDIPDKGTNKPYTVDWLDKNHIQLLNIKKQSKK.

Residue C82 coordinates Zn(2+). G83 is an L-cysteine binding site. The short motif at 84 to 94 (PTVYSSSHIGH) is the 'HIGH' region element. T123 contributes to the L-cysteine binding site. A 'KIIK' region motif is present at residues 128 to 131 (KIIN). Zn(2+)-binding residues include C271, H296, and E300. H296 contacts L-cysteine. The 'KMSKS' region motif lies at 337 to 341 (KMSKS). An ATP-binding site is contributed by K340.

This sequence belongs to the class-I aminoacyl-tRNA synthetase family. It depends on Zn(2+) as a cofactor.

The protein resides in the mitochondrion. The enzyme catalyses tRNA(Cys) + L-cysteine + ATP = L-cysteinyl-tRNA(Cys) + AMP + diphosphate. In terms of biological role, mitochondrial cysteine-specific aminoacyl-tRNA synthetase that catalyzes the ATP-dependent ligation of cysteine to tRNA(Cys). Its function is as follows. In addition to its role as an aminoacyl-tRNA synthetase, has also cysteine persulfide synthase activity. Produces reactive persulfide species such as cysteine persulfide (CysSSH) from substrate cysteine and mediate direct incorporation of CysSSH into proteins during translations, resulting in protein persulfides and polysulfides. CysSSHs behave as potent antioxidants and cellular protectants. The sequence is that of Probable cysteine--tRNA ligase, mitochondrial (mcysS) from Dictyostelium discoideum (Social amoeba).